We begin with the raw amino-acid sequence, 116 residues long: Protein Rev (116 aa).

Ser-5 and Ser-8 each carry phosphoserine; by host CK2. The homomultimerization stretch occupies residues 18 to 26 (LIKFLYQSN). A disordered region spans residues 23 to 48 (YQSNPPPSPEGTRQARRNRRRRWRAR). The Nuclear localization signal and RNA-binding (RRE) motif lies at 34–50 (TRQARRNRRRRWRARQR). Positions 36–48 (QARRNRRRRWRAR) are enriched in basic residues. The Nuclear export signal and binding to XPO1 motif lies at 73-84 (LQLPPLERLNLN). A disordered region spans residues 90 to 116 (GTSGTQGVGSPQIPVEPPAVLESGTEE). Ser-92 and Ser-99 each carry phosphoserine; by host.

This sequence belongs to the HIV-1 REV protein family. Homomultimer; when bound to the RRE. Multimeric assembly is essential for activity and may involve XPO1. Binds to human KPNB1, XPO1, TNPO1, RANBP5 and IPO7. Interacts with the viral Integrase. Interacts with human KHDRBS1. Interacts with human NAP1; this interaction decreases Rev multimerization and stimulates its activity. Interacts with human DEAD-box helicases DDX3 and DDX24; these interactions may serve for viral RNA export to the cytoplasm and packaging, respectively. Interacts with human PSIP1; this interaction may inhibit HIV-1 DNA integration by promoting dissociation of the Integrase-LEDGF/p75 complex. Asymmetrically arginine dimethylated at one site by host PRMT6. Methylation impairs the RNA-binding activity and export of viral RNA from the nucleus to the cytoplasm. In terms of processing, phosphorylated by protein kinase CK2. Presence of, and maybe binding to the N-terminus of the regulatory beta subunit of CK2 is necessary for CK2-mediated Rev's phosphorylation.

The protein localises to the host nucleus. It localises to the host nucleolus. The protein resides in the host cytoplasm. In terms of biological role, escorts unspliced or incompletely spliced viral pre-mRNAs (late transcripts) out of the nucleus of infected cells. These pre-mRNAs carry a recognition sequence called Rev responsive element (RRE) located in the env gene, that is not present in fully spliced viral mRNAs (early transcripts). This function is essential since most viral proteins are translated from unspliced or partially spliced pre-mRNAs which cannot exit the nucleus by the pathway used by fully processed cellular mRNAs. Rev itself is translated from a fully spliced mRNA that readily exits the nucleus. Rev's nuclear localization signal (NLS) binds directly to KPNB1/Importin beta-1 without previous binding to KPNA1/Importin alpha-1. KPNB1 binds to the GDP bound form of RAN (Ran-GDP) and targets Rev to the nucleus. In the nucleus, the conversion from Ran-GDP to Ran-GTP dissociates Rev from KPNB1 and allows Rev's binding to the RRE in viral pre-mRNAs. Rev multimerization on the RRE via cooperative assembly exposes its nuclear export signal (NES) to the surface. Rev can then form a complex with XPO1/CRM1 and Ran-GTP, leading to nuclear export of the complex. Conversion from Ran-GTP to Ran-GDP mediates dissociation of the Rev/RRE/XPO1/RAN complex, so that Rev can return to the nucleus for a subsequent round of export. Beside KPNB1, also seems to interact with TNPO1/Transportin-1, RANBP5/IPO5 and IPO7/RANBP7 for nuclear import. The nucleoporin-like HRB/RIP is an essential cofactor that probably indirectly interacts with Rev to release HIV RNAs from the perinuclear region to the cytoplasm. In Homo sapiens (Human), this protein is Protein Rev.